Consider the following 47-residue polypeptide: Protein YpaB (47 aa).

The polypeptide is Protein YpaB (ypaB) (Escherichia coli (strain K12)).